The sequence spans 241 residues: Probable 2-phosphosulfolactate phosphatase (241 aa).

This sequence belongs to the ComB family. It depends on Mg(2+) as a cofactor.

It carries out the reaction (2R)-O-phospho-3-sulfolactate + H2O = (2R)-3-sulfolactate + phosphate. This is Probable 2-phosphosulfolactate phosphatase from Gloeothece citriformis (strain PCC 7424) (Cyanothece sp. (strain PCC 7424)).